An 86-amino-acid chain; its full sequence is Large ribosomal subunit protein bL27 (86 aa).

It belongs to the bacterial ribosomal protein bL27 family.

This is Large ribosomal subunit protein bL27 from Koribacter versatilis (strain Ellin345).